The primary structure comprises 431 residues: Divergent protein kinase domain 1B (431 aa).

The Cytoplasmic portion of the chain corresponds to 1–30 (MRRLRRLAHLVLFCPFSKRLQGRLPGLRVR). The May mediate ER retention signature appears at 5–6 (RR). Residues 31–51 (CIFLAWLGVFAGSWLVYVHYS) traverse the membrane as a helical segment. Residues 52–431 (SYSERCRGHV…WKKISNTKYS (380 aa)) are Lumenal-facing. Cystine bridges form between Cys-57/Cys-94 and Cys-62/Cys-117.

Belongs to the DIPK family. Among the many cysteines in the lumenal domain, most are probably involved in disulfide bonds.

The protein resides in the endoplasmic reticulum membrane. This is Divergent protein kinase domain 1B from Homo sapiens (Human).